The sequence spans 232 residues: Urease accessory protein UreF (232 aa).

This sequence belongs to the UreF family. In terms of assembly, ureD, UreF and UreG form a complex that acts as a GTP-hydrolysis-dependent molecular chaperone, activating the urease apoprotein by helping to assemble the nickel containing metallocenter of UreC. The UreE protein probably delivers the nickel.

The protein localises to the cytoplasm. In terms of biological role, required for maturation of urease via the functional incorporation of the urease nickel metallocenter. This chain is Urease accessory protein UreF, found in Trichodesmium erythraeum (strain IMS101).